The primary structure comprises 239 residues: EF-hand domain-containing protein D2 (239 aa).

Residues Met1–Asp51 form a disordered region. Ala2 carries the N-acetylalanine modification. At Ser11 the chain carries Phosphoserine. The span at Ala32–Ala46 shows a compositional bias: low complexity. 2 positions are modified to phosphoserine: Ser73 and Ser75. Residue Tyr82 is modified to Phosphotyrosine. 2 EF-hand domains span residues Lys91 to Pro126 and Gln127 to Gly162. Asp104, Asp108, Glu115, Asp140, Asp142, Asp144, Lys146, and Glu151 together coordinate Ca(2+). N6-acetyllysine is present on Lys232.

In terms of assembly, interacts with CASP9; with inactive form.

It localises to the membrane raft. Functionally, may regulate B-cell receptor (BCR)-induced immature and primary B-cell apoptosis. Plays a role as negative regulator of the canonical NF-kappa-B-activating branch. Controls spontaneous apoptosis through the regulation of BCL2L1 abundance. This chain is EF-hand domain-containing protein D2 (Efhd2), found in Rattus norvegicus (Rat).